The following is a 384-amino-acid chain: Substance-K receptor (384 aa).

Residues 1–32 (MGAHASVTDTNILSGLESNATGVTAFSMPGWQ) are Extracellular-facing. Asn19 carries N-linked (GlcNAc...) asparagine glycosylation. Residues 33 to 56 (LALWATAYLALVLVAVTGNATVIW) traverse the membrane as a helical segment. Residues 57–69 (IILAHERMRTVTN) lie on the Cytoplasmic side of the membrane. The chain crosses the membrane as a helical span at residues 70 to 90 (YFIINLALADLCMAAFNATFN). Over 91 to 107 (FIYASHNIWYFGSTFCY) the chain is Extracellular. Cys106 and Cys181 are disulfide-bonded. Residues 108-129 (FQNLFPVTAMFVSIYSMTAIAA) traverse the membrane as a helical segment. Residues 130 to 149 (DRYMAIVHPFQPRLSAPSTK) lie on the Cytoplasmic side of the membrane. The chain crosses the membrane as a helical span at residues 150-170 (AVIAVIWLVALALASPQCFYS). Topologically, residues 171–196 (TITVDQGATKCVVAWPNDNGGKMLLL) are extracellular. The helical transmembrane segment at 197 to 218 (YHLVVFVLIYFLPLVVMFAAYS) threads the bilayer. Residues 219 to 251 (VIGLTLWKRAVPRHQAHGANLRHLQAKKKFVKA) lie on the Cytoplasmic side of the membrane. The chain crosses the membrane as a helical span at residues 252 to 272 (MVLVVVTFAICWLPYHLYFIL). At 273–290 (GTFQEDIYYRKFIQQVYL) the chain is on the extracellular side. A helical transmembrane segment spans residues 291–310 (ALFWLAMSSTMYNPIIYCCL). At 311 to 384 (NHRFRSGFRL…GPQDGEPAGP (74 aa)) the chain is on the cytoplasmic side. A lipid anchor (S-palmitoyl cysteine) is attached at Cys324. A disordered region spans residues 365–384 (HSEATNGQVGGPQDGEPAGP).

This sequence belongs to the G-protein coupled receptor 1 family.

The protein resides in the cell membrane. Its function is as follows. This is a receptor for the tachykinin neuropeptide substance K (neurokinin A). It is associated with G proteins that activate a phosphatidylinositol-calcium second messenger system. The rank order of affinity of this receptor to tachykinins is: substance K &gt; neuromedin-K &gt; substance P. This Mus musculus (Mouse) protein is Substance-K receptor (Tacr2).